Consider the following 139-residue polypeptide: Probable trafficking protein particle complex subunit 2 (139 aa).

The protein belongs to the TRAPP small subunits family. Sedlin subfamily. As to quaternary structure, part of the multisubunit TRAPP (transport protein particle) complex.

The protein localises to the cytoplasm. It is found in the perinuclear region. The protein resides in the endoplasmic reticulum. It localises to the golgi apparatus. Functionally, may play a role in vesicular transport from endoplasmic reticulum to Golgi. Involved in dsRNA uptake. The protein is Probable trafficking protein particle complex subunit 2 of Drosophila melanogaster (Fruit fly).